We begin with the raw amino-acid sequence, 84 residues long: Putative membrane protein insertion efficiency factor (84 aa).

This sequence belongs to the UPF0161 family.

The protein resides in the cell membrane. In terms of biological role, could be involved in insertion of integral membrane proteins into the membrane. In Staphylococcus carnosus (strain TM300), this protein is Putative membrane protein insertion efficiency factor.